Reading from the N-terminus, the 256-residue chain is Na(+)-translocating NADH-quinone reductase subunit E (256 aa).

6 helical membrane-spanning segments follow: residues 1 to 21 (MWLG…AAFI), 50 to 70 (MSVA…HAFI), 83 to 103 (LASV…IAAF), 123 to 143 (GIFL…LFGI), 149 to 169 (FIPM…AIVI), and 189 to 209 (MGIS…LTGI). Polar residues predominate over residues 229–249 (ENTTNPLKESSSKHQPSISKA). The interval 229 to 256 (ENTTNPLKESSSKHQPSISKARTQRRSL) is disordered.

Belongs to the NqrDE/RnfAE family. Composed of six subunits; NqrA, NqrB, NqrC, NqrD, NqrE and NqrF.

It is found in the cell inner membrane. The catalysed reaction is a ubiquinone + n Na(+)(in) + NADH + H(+) = a ubiquinol + n Na(+)(out) + NAD(+). Its function is as follows. NQR complex catalyzes the reduction of ubiquinone-1 to ubiquinol by two successive reactions, coupled with the transport of Na(+) ions from the cytoplasm to the periplasm. NqrA to NqrE are probably involved in the second step, the conversion of ubisemiquinone to ubiquinol. The chain is Na(+)-translocating NADH-quinone reductase subunit E from Chlamydia pneumoniae (Chlamydophila pneumoniae).